The sequence spans 334 residues: Cathepsin J (334 aa).

The first 17 residues, 1–17 (MTPTVLLLILCFGVASG), serve as a signal peptide directing secretion. Positions 18–113 (AQAHDPKLDA…PHAQNHVSIG (96 aa)) are cleaved as a propeptide — activation peptide. Asn72 carries N-linked (GlcNAc...) asparagine glycosylation. 2 disulfides stabilise this stretch: Cys135–Cys178 and Cys169–Cys211. Residue Cys138 is part of the active site. Asn217, Asn221, and Asn268 each carry an N-linked (GlcNAc...) asparagine glycan. Residues Cys269 and Cys322 are joined by a disulfide bond. Residues His276 and Asn300 contribute to the active site.

Belongs to the peptidase C1 family. In terms of tissue distribution, expressed specifically in placenta.

The protein localises to the lysosome. The protein is Cathepsin J (Ctsj) of Mus musculus (Mouse).